A 405-amino-acid polypeptide reads, in one-letter code: Glucose-1-phosphate adenylyltransferase (405 aa).

Alpha-D-glucose 1-phosphate-binding positions include Tyr-96, Gly-161, 176-177, and Ser-194; that span reads EK.

It belongs to the bacterial/plant glucose-1-phosphate adenylyltransferase family. As to quaternary structure, homotetramer.

It catalyses the reaction alpha-D-glucose 1-phosphate + ATP + H(+) = ADP-alpha-D-glucose + diphosphate. It functions in the pathway glycan biosynthesis; glycogen biosynthesis. Involved in the biosynthesis of ADP-glucose, a building block required for the elongation reactions to produce glycogen. Catalyzes the reaction between ATP and alpha-D-glucose 1-phosphate (G1P) to produce pyrophosphate and ADP-Glc. In Aliivibrio fischeri (strain ATCC 700601 / ES114) (Vibrio fischeri), this protein is Glucose-1-phosphate adenylyltransferase.